Reading from the N-terminus, the 274-residue chain is Deoxyribonuclease TATDN3 (274 aa).

6 residues coordinate Zn(2+): His-12, His-14, Glu-107, His-147, His-170, and Asp-218.

It belongs to the metallo-dependent hydrolases superfamily. TatD-type hydrolase family. It depends on Mn(2+) as a cofactor. Ca(2+) is required as a cofactor. Requires Mg(2+) as cofactor. Zn(2+) serves as cofactor.

It is found in the nucleus. Its activity is regulated as follows. The 3'-exonuclease activity is sensitive to the metal ion present in the active site, whereas the AP endodeoxyribonuclease activity is observed in a variety of divalent metal cofactors. 3'-exoxonuclease activity is suppressed in the presence of Ca(2+), Zn(2+) and Ni(2+). Functionally, exhibits 3'-exonuclease activities and apurinic/apyrimidinic (AP) endonuclease (in vitro). Show preferential AP endonuclease activity on double-stranded DNA substrates and 3'- exonuclease activity on single-stranded DNA. This Homo sapiens (Human) protein is Deoxyribonuclease TATDN3 (TATDN3).